The following is a 643-amino-acid chain: Ecto-NOX disulfide-thiol exchanger 1 (643 aa).

In terms of domain architecture, RRM spans 142–221 (KTVFVGGLPE…GRLHVDFAQA (80 aa)). 2 coiled-coil regions span residues 307-342 (VQSA…LTGI) and 425-570 (QAYA…EALL).

This sequence belongs to the ENOX family. Cu cation is required as a cofactor. As to expression, expressed in lymphocyte cells, breast and breast cancer (at protein level). Found in the sera of cancer patients with a wide variety of cancers including breast, prostate, lung and ovarian cancers, leukemias, and lymphomas. Found also in the serum of healthy volunteers or patients with disorders other than cancer. Probably shed into serum by cancer cells.

It localises to the cell membrane. The protein resides in the secreted. Its subcellular location is the extracellular space. With respect to regulation, not inhibited by the antitumor sulfonylurea LY181984, the vabilloid capsaicin, and retinoids. In terms of biological role, probably acts as a terminal oxidase of plasma electron transport from cytosolic NAD(P)H via hydroquinones to acceptors at the cell surface. Hydroquinone oxidase activity alternates with a protein disulfide-thiol interchange/oxidoreductase activity which may control physical membrane displacements associated with vesicle budding or cell enlargement. The activities oscillate with a period length of 24 minutes and play a role in control of the ultradian cellular biological clock. This Homo sapiens (Human) protein is Ecto-NOX disulfide-thiol exchanger 1 (ENOX1).